Here is a 380-residue protein sequence, read N- to C-terminus: MDFNLNDEQELFVAGIRELMASENWEAYFAECDRDSVYPERFVKALADMGIDCLLIPEEHGGLDAGFVTLAAVWMELGRLGAPTYVLYQLPGGFNTFLREGTQEQIDKIMAFRGTGKQMWNSAITEPGAGSDVGSLKTTYTRRNGKIYLNGSKCFITSSAYTPYIVVMARDGASPDKPVYTEWFVDMSKPGIKVTKLEKLGLRMDSCCEITFDDVELDEKDMFGREGNGFNRVKEEFDHERFLVALTNYGTAMCAFEDAARYANQRVQFGEAIGRFQLIQEKFAHMAIKLNSMKNMLYEAAWKADNGTITSGDAAMCKYFCANAAFEVVDSAMQVLGGVGIAGNHRISRFWRDLRVDRVSGGSDEMQILTLGRAVLKQYR.

It belongs to the acyl-CoA dehydrogenase family. In terms of assembly, homotetramer. FAD serves as cofactor.

The protein localises to the cytoplasm. It carries out the reaction 4-(trimethylamino)butanoyl-CoA + oxidized [electron-transfer flavoprotein] + H(+) = crotonobetainyl-CoA + reduced [electron-transfer flavoprotein]. The protein operates within amine and polyamine metabolism; carnitine metabolism. In terms of biological role, catalyzes the reduction of crotonobetainyl-CoA to gamma-butyrobetainyl-CoA. This Escherichia coli O6:K15:H31 (strain 536 / UPEC) protein is Crotonobetainyl-CoA reductase.